Consider the following 146-residue polypeptide: Cell division protein SepF (146 aa).

Belongs to the SepF family. As to quaternary structure, homodimer. Interacts with FtsZ.

It is found in the cytoplasm. Its function is as follows. Cell division protein that is part of the divisome complex and is recruited early to the Z-ring. Probably stimulates Z-ring formation, perhaps through the cross-linking of FtsZ protofilaments. Its function overlaps with FtsA. This is Cell division protein SepF from Alkaliphilus oremlandii (strain OhILAs) (Clostridium oremlandii (strain OhILAs)).